Consider the following 28-residue polypeptide: Cytochrome c oxidase subunit 5B, mitochondrial (28 aa).

It belongs to the cytochrome c oxidase subunit 5B family. As to quaternary structure, component of the cytochrome c oxidase (complex IV, CIV), a multisubunit enzyme composed of a catalytic core of 3 subunits and several supernumerary subunits. The complex exists as a monomer or a dimer and forms supercomplexes (SCs) in the inner mitochondrial membrane with ubiquinol-cytochrome c oxidoreductase (cytochrome b-c1 complex, complex III, CIII).

It localises to the mitochondrion inner membrane. It participates in energy metabolism; oxidative phosphorylation. In terms of biological role, component of the cytochrome c oxidase, the last enzyme in the mitochondrial electron transport chain which drives oxidative phosphorylation. The respiratory chain contains 3 multisubunit complexes succinate dehydrogenase (complex II, CII), ubiquinol-cytochrome c oxidoreductase (cytochrome b-c1 complex, complex III, CIII) and cytochrome c oxidase (complex IV, CIV), that cooperate to transfer electrons derived from NADH and succinate to molecular oxygen, creating an electrochemical gradient over the inner membrane that drives transmembrane transport and the ATP synthase. Cytochrome c oxidase is the component of the respiratory chain that catalyzes the reduction of oxygen to water. Electrons originating from reduced cytochrome c in the intermembrane space (IMS) are transferred via the dinuclear copper A center (CU(A)) of subunit 2 and heme A of subunit 1 to the active site in subunit 1, a binuclear center (BNC) formed by heme A3 and copper B (CU(B)). The BNC reduces molecular oxygen to 2 water molecules using 4 electrons from cytochrome c in the IMS and 4 protons from the mitochondrial matrix. This Solanum tuberosum (Potato) protein is Cytochrome c oxidase subunit 5B, mitochondrial.